Consider the following 240-residue polypeptide: UDP-2,3-diacylglucosamine hydrolase (240 aa).

Mn(2+)-binding residues include D8, H10, D41, N79, and H114. 79–80 (NR) contacts substrate. D122, S160, N164, K167, and H195 together coordinate substrate. 2 residues coordinate Mn(2+): H195 and H197.

The protein belongs to the LpxH family. The cofactor is Mn(2+).

It localises to the cell inner membrane. The enzyme catalyses UDP-2-N,3-O-bis[(3R)-3-hydroxytetradecanoyl]-alpha-D-glucosamine + H2O = 2-N,3-O-bis[(3R)-3-hydroxytetradecanoyl]-alpha-D-glucosaminyl 1-phosphate + UMP + 2 H(+). Its pathway is glycolipid biosynthesis; lipid IV(A) biosynthesis; lipid IV(A) from (3R)-3-hydroxytetradecanoyl-[acyl-carrier-protein] and UDP-N-acetyl-alpha-D-glucosamine: step 4/6. Its function is as follows. Hydrolyzes the pyrophosphate bond of UDP-2,3-diacylglucosamine to yield 2,3-diacylglucosamine 1-phosphate (lipid X) and UMP by catalyzing the attack of water at the alpha-P atom. Involved in the biosynthesis of lipid A, a phosphorylated glycolipid that anchors the lipopolysaccharide to the outer membrane of the cell. In Salmonella paratyphi C (strain RKS4594), this protein is UDP-2,3-diacylglucosamine hydrolase.